The following is a 387-amino-acid chain: ATP phosphoribosyltransferase regulatory subunit (387 aa).

Belongs to the class-II aminoacyl-tRNA synthetase family. HisZ subfamily. As to quaternary structure, heteromultimer composed of HisG and HisZ subunits.

It is found in the cytoplasm. Its pathway is amino-acid biosynthesis; L-histidine biosynthesis; L-histidine from 5-phospho-alpha-D-ribose 1-diphosphate: step 1/9. Required for the first step of histidine biosynthesis. May allow the feedback regulation of ATP phosphoribosyltransferase activity by histidine. The chain is ATP phosphoribosyltransferase regulatory subunit from Polynucleobacter necessarius subsp. necessarius (strain STIR1).